We begin with the raw amino-acid sequence, 277 residues long: Large ribosomal subunit protein uL2 (277 aa).

A disordered region spans residues 218 to 277 (PTVRGSVMNPNDHPHGGGEGKAPVGRKAPSTPWGKPALGLKTRNKKAKSDKLIVRRRNEK). The segment covering 264 to 277 (AKSDKLIVRRRNEK) has biased composition (basic and acidic residues).

This sequence belongs to the universal ribosomal protein uL2 family. In terms of assembly, part of the 50S ribosomal subunit. Forms a bridge to the 30S subunit in the 70S ribosome.

One of the primary rRNA binding proteins. Required for association of the 30S and 50S subunits to form the 70S ribosome, for tRNA binding and peptide bond formation. It has been suggested to have peptidyltransferase activity; this is somewhat controversial. Makes several contacts with the 16S rRNA in the 70S ribosome. The polypeptide is Large ribosomal subunit protein uL2 (Streptococcus pyogenes serotype M4 (strain MGAS10750)).